We begin with the raw amino-acid sequence, 1328 residues long: ABC transporter G family member 2 (1328 aa).

Positions 53–299 constitute an ABC transporter 1 domain; sequence VTARNLSMSI…FEGLGFKLPK (247 aa). Residue 91–98 participates in ATP binding; it reads GSPGCGKT. One can recognise an ABC transmembrane type-2 1 domain in the interval 388 to 665; sequence ISSQVAVRMR…FGMYFFLKNV (278 aa). 7 helical membrane-spanning segments follow: residues 398-418, 428-448, 477-497, 504-524, 534-554, 559-579, and 642-662; these read IIKSIVMGLILGSLFYGLDLN, LIFFSLLFIVFSGMGAIAILF, IPIALLETVVFCVLVYWMCGL, FIYFLLMNFVGDLAFQSFFKM, LASVIAPAALAPFILFSGFMA, IGGWWIWIYWISPIKYAFEGL, and IDLLIVFAFGALFSFGMYFFL. The segment at 670-691 is disordered; the sequence is RASDPKNDKRSKKASKRSKKIK. A compositionally biased stretch (basic residues) spans 678–689; sequence KRSKKASKRSKK. In terms of domain architecture, ABC transporter 2 spans 721–960; sequence VYEVDVKKDG…DLLGYFENHG (240 aa). 755 to 762 serves as a coordination point for ATP; sequence GPSGAGKS. Residues 1049–1286 form the ABC transmembrane type-2 2 domain; that stretch reads VRRVQNIRTR…PICPITNGNQ (238 aa). The next 6 membrane-spanning stretches (helical) occupy residues 1059–1076, 1087–1107, 1128–1148, 1172–1192, 1197–1217, and 1303–1323; these read LMRSLFLGVVLGTLFVRM, VSILFFSLMFGGMSGMSSIPI, IYLFTFIVTDLPWVFLSAIIY, FISFTTYFNFSMLAMVFATVL, IAHALGGVALSISSLFAGFMI, and AVIFGYSVFFFICIFIALKFI.

The protein belongs to the ABC transporter superfamily. ABCG family. PDR (TC 3.A.1.205) subfamily.

The protein localises to the endosome membrane. In terms of biological role, required for endocytosis and endosomal pH regulation. This chain is ABC transporter G family member 2 (abcG2), found in Dictyostelium discoideum (Social amoeba).